The following is a 520-amino-acid chain: uncharacterized protein (520 aa).

9 consecutive transmembrane segments (helical) span residues 38–58 (VVLI…IPGG), 84–104 (IAIY…GIFN), 105–125 (IGIS…ILKV), 138–158 (IITV…VATL), 167–187 (VVSA…LVET), 220–240 (FGWL…AVVL), 271–291 (FLSF…VYTA), 318–338 (IAIG…SVLI), and 355–375 (ASLV…MVYF).

It is found in the cell membrane. This is an uncharacterized protein from Mycoplasma genitalium (strain ATCC 33530 / DSM 19775 / NCTC 10195 / G37) (Mycoplasmoides genitalium).